An 831-amino-acid polypeptide reads, in one-letter code: Zinc phosphodiesterase ELAC protein 2 (831 aa).

Residues 1–16 (MWALRSLLRPLGLRTM) constitute a mitochondrion transit peptide. 2 disordered regions span residues 15–47 (TMSQGSARRPRPSKDPLRHLRTREKRGPGPGGP) and 179–227 (SERR…ANRK). Residues 186–212 (QQPSQSPRTSPNRLSPKQSSDSGSAEN) are compositionally biased toward polar residues. Phosphoserine is present on residues S191, S195, S200, S204, and S732. A disordered region spans residues 791 to 831 (LTQQADSPEDREPQQKRAHTDEPHSPQSKKESVANTLGARV). At T792 the chain carries Phosphothreonine. Phosphoserine is present on residues S797 and S815. The span at 798-822 (PEDREPQQKRAHTDEPHSPQSKKES) shows a compositional bias: basic and acidic residues.

It belongs to the RNase Z family. Homodimer. Interacts with PTCD1. It depends on Zn(2+) as a cofactor.

It is found in the mitochondrion. The protein resides in the mitochondrion matrix. Its subcellular location is the mitochondrion nucleoid. It localises to the nucleus. The enzyme catalyses Endonucleolytic cleavage of RNA, removing extra 3' nucleotides from tRNA precursor, generating 3' termini of tRNAs. A 3'-hydroxy group is left at the tRNA terminus and a 5'-phosphoryl group is left at the trailer molecule.. In terms of biological role, zinc phosphodiesterase, which displays mitochondrial tRNA 3'-processing endonuclease activity. Involved in tRNA maturation, by removing a 3'-trailer from precursor tRNA. Associates with mitochondrial DNA complexes at the nucleoids to initiate RNA processing and ribosome assembly. The protein is Zinc phosphodiesterase ELAC protein 2 (Elac2) of Mus musculus (Mouse).